The sequence spans 393 residues: Acetyl-CoA acetyltransferase (393 aa).

The active-site Acyl-thioester intermediate is C88. Catalysis depends on proton acceptor residues H349 and C379.

It belongs to the thiolase-like superfamily. Thiolase family. In terms of assembly, homotetramer.

The protein localises to the cytoplasm. It carries out the reaction 2 acetyl-CoA = acetoacetyl-CoA + CoA. Its pathway is biopolymer metabolism; poly-(R)-3-hydroxybutanoate biosynthesis. With respect to regulation, the condensation reaction is inhibited by free CoA. The cleavage reaction is characterized by substrate inhibition by acetoacetyl-CoA, which is partially relieved by free CoA. Its function is as follows. Catalyzes the condensation of two acetyl-coA units to form acetoacetyl-CoA. Is involved in the biosynthesis of polyhydroxybutyrate (PHB), which is accumulated as an intracellular energy reserve material when cells grow under conditions of nutrient limitation. Also catalyzes the reverse reaction, i.e. the cleavage of acetoacetyl-CoA, and is therefore also involved in the reutilization of PHB. In Cupriavidus necator (strain ATCC 17699 / DSM 428 / KCTC 22496 / NCIMB 10442 / H16 / Stanier 337) (Ralstonia eutropha), this protein is Acetyl-CoA acetyltransferase.